A 297-amino-acid chain; its full sequence is tRNA dimethylallyltransferase (297 aa).

15 to 22 is an ATP binding site; the sequence is GPTASGKS. A substrate-binding site is contributed by 17-22; the sequence is TASGKS. 2 interaction with substrate tRNA regions span residues 40 to 43 and 164 to 168; these read DSMQ and QRIVR.

Belongs to the IPP transferase family. Monomer. The cofactor is Mg(2+).

The enzyme catalyses adenosine(37) in tRNA + dimethylallyl diphosphate = N(6)-dimethylallyladenosine(37) in tRNA + diphosphate. Catalyzes the transfer of a dimethylallyl group onto the adenine at position 37 in tRNAs that read codons beginning with uridine, leading to the formation of N6-(dimethylallyl)adenosine (i(6)A). This Rhizobium etli (strain ATCC 51251 / DSM 11541 / JCM 21823 / NBRC 15573 / CFN 42) protein is tRNA dimethylallyltransferase.